The following is a 1226-amino-acid chain: Methionine synthase (1226 aa).

In terms of domain architecture, Hcy-binding spans 6–326 (RAQIEAQLKQ…EHIRHMAMAV (321 aa)). The Zn(2+) site is built by Cys248, Cys311, and Cys312. In terms of domain architecture, Pterin-binding spans 357-618 (FVNVGERTNV…VPEKLREAVE (262 aa)). The 95-residue stretch at 651–745 (SALEWRTWSV…FINASKQAGS (95 aa)) folds into the B12-binding N-terminal domain. Methylcob(III)alamin is bound by residues Glu695, 757-761 (GDVHD), His760, Ser805, Thr809, and Ala861. Positions 747-882 (NGKILLATVK…SDELRPAFVE (136 aa)) constitute a B12-binding domain. The region spanning 898–1226 (KKPRTKPVTL…EKWLGPNING (329 aa)) is the AdoMet activation domain. S-adenosyl-L-methionine is bound by residues Asp948, Arg1136, and 1191-1192 (YF).

Belongs to the vitamin-B12 dependent methionine synthase family. It depends on methylcob(III)alamin as a cofactor. Zn(2+) is required as a cofactor.

It carries out the reaction (6S)-5-methyl-5,6,7,8-tetrahydrofolate + L-homocysteine = (6S)-5,6,7,8-tetrahydrofolate + L-methionine. It functions in the pathway amino-acid biosynthesis; L-methionine biosynthesis via de novo pathway; L-methionine from L-homocysteine (MetH route): step 1/1. Functionally, catalyzes the transfer of a methyl group from methyl-cobalamin to homocysteine, yielding enzyme-bound cob(I)alamin and methionine. Subsequently, remethylates the cofactor using methyltetrahydrofolate. The sequence is that of Methionine synthase (metH) from Vibrio vulnificus (strain CMCP6).